We begin with the raw amino-acid sequence, 90 residues long: Co-chaperonin GroES (90 aa).

This sequence belongs to the GroES chaperonin family. Heptamer of 7 subunits arranged in a ring. Interacts with the chaperonin GroEL.

The protein localises to the cytoplasm. Its function is as follows. Together with the chaperonin GroEL, plays an essential role in assisting protein folding. The GroEL-GroES system forms a nano-cage that allows encapsulation of the non-native substrate proteins and provides a physical environment optimized to promote and accelerate protein folding. GroES binds to the apical surface of the GroEL ring, thereby capping the opening of the GroEL channel. The sequence is that of Co-chaperonin GroES from Bacteroides thetaiotaomicron (strain ATCC 29148 / DSM 2079 / JCM 5827 / CCUG 10774 / NCTC 10582 / VPI-5482 / E50).